The primary structure comprises 693 residues: Subtilisin-like protease SBT4.10 (693 aa).

Residues 1 to 25 (MAKLREASFCALACVLVLFLSFVSA) form the signal peptide. A propeptide spans 26–113 (DTYNRQDKQV…VFPSKKYKLH (88 aa)) (activation peptide). The 79-residue stretch at 35–113 (VYVVYMGSLP…VFPSKKYKLH (79 aa)) folds into the Inhibitor I9 domain. The region spanning 117–536 (SWDFMGLKEG…SGHIDPIAAI (420 aa)) is the Peptidase S8 domain. The active-site Charge relay system is the D145. N176 carries an N-linked (GlcNAc...) asparagine glycan. H200 (charge relay system) is an active-site residue. 5 N-linked (GlcNAc...) asparagine glycosylation sites follow: N215, N223, N368, N413, and N467. Positions 354-396 (QYPLVYETSVEKCNNESLTTLALSFLTLTPQSNEQIISMFHTL) constitute a PA domain. S475 acts as the Charge relay system in catalysis. N559, N603, and N613 each carry an N-linked (GlcNAc...) asparagine glycan.

Belongs to the peptidase S8 family. Post-translationally, the C-terminal propeptide is autocleaved.

It localises to the secreted. This chain is Subtilisin-like protease SBT4.10, found in Arabidopsis thaliana (Mouse-ear cress).